A 453-amino-acid chain; its full sequence is UDP-N-acetylmuramoylalanine--D-glutamate ligase (453 aa).

Position 117-123 (117-123 (GANGKST)) interacts with ATP.

It belongs to the MurCDEF family.

It is found in the cytoplasm. It catalyses the reaction UDP-N-acetyl-alpha-D-muramoyl-L-alanine + D-glutamate + ATP = UDP-N-acetyl-alpha-D-muramoyl-L-alanyl-D-glutamate + ADP + phosphate + H(+). Its pathway is cell wall biogenesis; peptidoglycan biosynthesis. In terms of biological role, cell wall formation. Catalyzes the addition of glutamate to the nucleotide precursor UDP-N-acetylmuramoyl-L-alanine (UMA). The protein is UDP-N-acetylmuramoylalanine--D-glutamate ligase of Methylobacillus flagellatus (strain ATCC 51484 / DSM 6875 / VKM B-1610 / KT).